A 479-amino-acid chain; its full sequence is Protein ORD (479 aa).

The interval 102–140 (KEEETEPESESDLDEGPSTSKQALERMVQRAERKAKEAS) is disordered. A compositionally biased stretch (acidic residues) spans 104-116 (EETEPESESDLDE). Positions 124 to 140 (ALERMVQRAERKAKEAS) are enriched in basic and acidic residues.

As to quaternary structure, interacts with Sce.

It is found in the nucleus. It localises to the chromosome. Its subcellular location is the centromere. Essential for proper maintenance of sister-chromatid cohesion in both male and female meiosis. Mutations in ord cause premature separation of the sister chromatids in meiosis I and random segregation in both meiotic divisions. Required for chiasma maintenance in female meiosis. Mutations in ord reduce recombination in female meiosis. This Drosophila melanogaster (Fruit fly) protein is Protein ORD (ord).